The sequence spans 579 residues: Potassium-transporting ATPase potassium-binding subunit (579 aa).

The next 10 membrane-spanning stretches (helical) occupy residues 2–22 (MNLV…AIPL), 66–86 (SFSV…LHIF), 135–155 (GLTV…FALI), 177–197 (VLYI…SQGV), 260–280 (TILS…ALCF), 292–312 (GIAI…IVGV), 391–411 (VFGG…LAVF), 437–457 (VLVC…ASIL), 490–510 (FAGF…SMIF), and 546–566 (FIGL…FPAL).

It belongs to the KdpA family. As to quaternary structure, the system is composed of three essential subunits: KdpA, KdpB and KdpC.

It is found in the cell membrane. Part of the high-affinity ATP-driven potassium transport (or Kdp) system, which catalyzes the hydrolysis of ATP coupled with the electrogenic transport of potassium into the cytoplasm. This subunit binds the extracellular potassium ions and delivers the ions to the membrane domain of KdpB through an intramembrane tunnel. This chain is Potassium-transporting ATPase potassium-binding subunit, found in Clostridium botulinum (strain Eklund 17B / Type B).